Reading from the N-terminus, the 129-residue chain is MSASIARATVRAVSRRKILSTRAALTLTPSAVNKVKQLLDNKPEYIGLKVGVRTRGCNGLTYTLDYTKNKEQSDEEVLQDGVRVFIEKKAQLTLLGTEMDFVETKLSSEFVFNNPNIKGTCGCGESFNI.

The transit peptide at 1 to 12 (MSASIARATVRA) directs the protein to the mitochondrion. 3 residues coordinate Fe cation: Cys57, Cys121, and Cys123.

The protein belongs to the HesB/IscA family.

The protein resides in the mitochondrion. In terms of biological role, involved in the maturation of mitochondrial 4Fe-4S proteins functioning late in the iron-sulfur cluster assembly pathway. Probably involved in the binding of an intermediate of Fe/S cluster assembly. The chain is Iron-sulfur cluster assembly 1 homolog, mitochondrial (isca1) from Danio rerio (Zebrafish).